Consider the following 410-residue polypeptide: ORC1-type DNA replication protein 2 (410 aa).

Residues 60 to 65, Tyr213, and Arg225 contribute to the ATP site; that span reads GIGKTT.

Belongs to the CDC6/cdc18 family.

Functionally, involved in regulation of DNA replication. Binds DNA. The sequence is that of ORC1-type DNA replication protein 2 (orc2) from Aeropyrum pernix (strain ATCC 700893 / DSM 11879 / JCM 9820 / NBRC 100138 / K1).